The primary structure comprises 242 residues: Ribonuclease 3 (242 aa).

Positions 7 to 136 (LEALQNLLGY…LLASIYLDGG (130 aa)) constitute an RNase III domain. Glu49 provides a ligand contact to Mg(2+). Asp53 is an active-site residue. Residues Asp122 and Glu125 each contribute to the Mg(2+) site. Glu125 is an active-site residue. Residues 167–236 (DYKTQLQELT…AEKALQIIAA (70 aa)) form the DRBM domain.

This sequence belongs to the ribonuclease III family. As to quaternary structure, homodimer. The cofactor is Mg(2+).

The protein resides in the cytoplasm. The enzyme catalyses Endonucleolytic cleavage to 5'-phosphomonoester.. In terms of biological role, digests double-stranded RNA. Involved in the processing of primary rRNA transcript to yield the immediate precursors to the large and small rRNAs (23S and 16S). Processes some mRNAs, and tRNAs when they are encoded in the rRNA operon. Processes pre-crRNA and tracrRNA of type II CRISPR loci if present in the organism. The protein is Ribonuclease 3 of Syntrophobacter fumaroxidans (strain DSM 10017 / MPOB).